The chain runs to 325 residues: Elongation factor P--(R)-beta-lysine ligase (325 aa).

76–78 (SPE) serves as a coordination point for substrate. ATP is bound by residues 100–102 (RNE) and N109. Y118 contacts substrate. Residue 244 to 245 (EL) coordinates ATP. E251 contributes to the substrate binding site. Position 300 (G300) interacts with ATP.

This sequence belongs to the class-II aminoacyl-tRNA synthetase family. EpmA subfamily. As to quaternary structure, homodimer.

The enzyme catalyses D-beta-lysine + L-lysyl-[protein] + ATP = N(6)-((3R)-3,6-diaminohexanoyl)-L-lysyl-[protein] + AMP + diphosphate + H(+). Its function is as follows. With EpmB is involved in the beta-lysylation step of the post-translational modification of translation elongation factor P (EF-P). Catalyzes the ATP-dependent activation of (R)-beta-lysine produced by EpmB, forming a lysyl-adenylate, from which the beta-lysyl moiety is then transferred to the epsilon-amino group of a conserved specific lysine residue in EF-P. This Sodalis glossinidius (strain morsitans) protein is Elongation factor P--(R)-beta-lysine ligase.